The following is a 111-amino-acid chain: Probable 4-amino-4-deoxy-L-arabinose-phosphoundecaprenol flippase subunit ArnE (111 aa).

Residues 1-35 are Cytoplasmic-facing; that stretch reads MIWLTLVFASLLSVAGQLCQKQATCFAAVNKRRKH. The chain crosses the membrane as a helical span at residues 36 to 56; it reads IVLWLGLALACLGLAMVLWLL. In terms of domain architecture, EamA spans 40–109; it reads LGLALACLGL…IIGGIVILGS (70 aa). Over 57–60 the chain is Periplasmic; the sequence is VLQN. The chain crosses the membrane as a helical span at residues 61–81; the sequence is VPVGIAYPMLSLNFVWVTLAA. At 82–87 the chain is on the cytoplasmic side; the sequence is VKLWHE. A helical transmembrane segment spans residues 88 to 108; the sequence is PVSLRHWCGVAFIIGGIVILG. Topologically, residues 109 to 111 are periplasmic; that stretch reads STV.

The protein belongs to the ArnE family. In terms of assembly, heterodimer of ArnE and ArnF.

The protein localises to the cell inner membrane. Its pathway is bacterial outer membrane biogenesis; lipopolysaccharide biosynthesis. Its function is as follows. Translocates 4-amino-4-deoxy-L-arabinose-phosphoundecaprenol (alpha-L-Ara4N-phosphoundecaprenol) from the cytoplasmic to the periplasmic side of the inner membrane. In Escherichia coli (strain UTI89 / UPEC), this protein is Probable 4-amino-4-deoxy-L-arabinose-phosphoundecaprenol flippase subunit ArnE.